Reading from the N-terminus, the 76-residue chain is Sec-independent protein translocase protein TatA (76 aa).

Residues 1-21 (MGSFSIWHWLVVLAIVVLVFG) form a helical membrane-spanning segment. Residues 41-76 (EGMKGAEEESTPPPPAQQVTGHSIKSEIEEKDQTKV) form a disordered region. Positions 64–76 (IKSEIEEKDQTKV) are enriched in basic and acidic residues.

Belongs to the TatA/E family. As to quaternary structure, the Tat system comprises two distinct complexes: a TatABC complex, containing multiple copies of TatA, TatB and TatC subunits, and a separate TatA complex, containing only TatA subunits. Substrates initially bind to the TatABC complex, which probably triggers association of the separate TatA complex to form the active translocon.

Its subcellular location is the cell inner membrane. Its function is as follows. Part of the twin-arginine translocation (Tat) system that transports large folded proteins containing a characteristic twin-arginine motif in their signal peptide across membranes. TatA could form the protein-conducting channel of the Tat system. This chain is Sec-independent protein translocase protein TatA, found in Nitrosomonas europaea (strain ATCC 19718 / CIP 103999 / KCTC 2705 / NBRC 14298).